The sequence spans 331 residues: Gamma-parvin (331 aa).

N-acetylmethionine is present on M1. A disordered region spans residues 18–38; it reads QPTEEELPRGGKKKYLSPNSK. Calponin-homology (CH) domains are found at residues 44 to 151 and 210 to 317; these read EELQ…KRFQ and HAVQ…QKHS.

It belongs to the parvin family. In terms of assembly, interacts with ILK; the interaction promotes the establishment of cell polarity required for leukocyte migration. Interacts with ARHGEF6; the guanine nucleotide exchange factor activity of ARHGEF6 is essential for the PARVG-induced enhancement of cell spreading. Expressed strongly in spleen and testis, moderately in lung and weakly in brain and heart.

It localises to the cell junction. The protein localises to the focal adhesion. The protein resides in the cell membrane. It is found in the cytoplasm. Its subcellular location is the cytoskeleton. Its function is as follows. Plays a role with ILK in promoting the cell adhesion and spreading of leukocytes. The chain is Gamma-parvin (Parvg) from Mus musculus (Mouse).